A 406-amino-acid polypeptide reads, in one-letter code: Riboflavin biosynthesis protein RibBA (406 aa).

A DHBP synthase region spans residues 1–209; sequence MSEREEFKFN…IADLIKYRLR (209 aa). Residues 33-34, D38, 148-152, and E172 each bind D-ribulose 5-phosphate; these read RE and RAGHT. E34 serves as a coordination point for Mg(2+). H151 contacts Mg(2+). The segment at 210-406 is GTP cyclohydrolase II; the sequence is RETLVEKVAS…VKKDKLGHMF (197 aa). 260–264 is a binding site for GTP; the sequence is RVHSE. Zn(2+)-binding residues include C265, C276, and C278. GTP contacts are provided by residues Q281, 304-306, and T326; that span reads EGR. The Proton acceptor; for GTP cyclohydrolase activity role is filled by D338. The active-site Nucleophile; for GTP cyclohydrolase activity is the R340. GTP contacts are provided by T361 and K366.

The protein in the N-terminal section; belongs to the DHBP synthase family. It in the C-terminal section; belongs to the GTP cyclohydrolase II family. Mg(2+) serves as cofactor. Requires Mn(2+) as cofactor. It depends on Zn(2+) as a cofactor.

It carries out the reaction D-ribulose 5-phosphate = (2S)-2-hydroxy-3-oxobutyl phosphate + formate + H(+). The catalysed reaction is GTP + 4 H2O = 2,5-diamino-6-hydroxy-4-(5-phosphoribosylamino)-pyrimidine + formate + 2 phosphate + 3 H(+). Its pathway is cofactor biosynthesis; riboflavin biosynthesis; 2-hydroxy-3-oxobutyl phosphate from D-ribulose 5-phosphate: step 1/1. It participates in cofactor biosynthesis; riboflavin biosynthesis; 5-amino-6-(D-ribitylamino)uracil from GTP: step 1/4. In terms of biological role, catalyzes the conversion of D-ribulose 5-phosphate to formate and 3,4-dihydroxy-2-butanone 4-phosphate. Catalyzes the conversion of GTP to 2,5-diamino-6-ribosylamino-4(3H)-pyrimidinone 5'-phosphate (DARP), formate and pyrophosphate. In Aquifex aeolicus (strain VF5), this protein is Riboflavin biosynthesis protein RibBA.